Reading from the N-terminus, the 262-residue chain is uncharacterized protein (262 aa).

Residues 1 to 22 form the signal peptide; sequence MMNNSITLLLALLVGLVGFAFT.

Belongs to the IIV-6 117L family.

This is an uncharacterized protein from Aedes vexans (Inland floodwater mosquito).